Reading from the N-terminus, the 240-residue chain is MLSTAAYRDVERELGMGPHGSAGPVQLRFSPYAFNGGTVLAIAGEDFSIVASDTRLSEGFSIHTRDSPKCYKLTDKTVIGCSGFHGDCLTLTKIIEARLKMYKHSNNKAMTTGAIAAMLSTILYSRRFFPYYVYNIIGGLDEEGKGAVYSFDPVGSYQRDSFKAGGSASAMLQPLLDNQVGFKNMQNVEHVPLTLDRAMRLVKDVFISAAERDVYTGDALRICIVTKEGIREETVPLRKD.

Met-1 carries the N-acetylmethionine modification. Residues 1–27 (MLSTAAYRDVERELGMGPHGSAGPVQL) constitute a propeptide that is removed on maturation. Ser-57 carries O-linked (GlcNAc) serine glycosylation. Residues Ser-61 and Ser-67 each carry the phosphoserine modification. Tyr-149 carries the post-translational modification Phosphotyrosine. At Ser-161 the chain carries Phosphoserine. Lys-203 carries the post-translational modification N6-acetyllysine. Ser-208 carries an O-linked (GlcNAc) serine glycan.

It belongs to the peptidase T1B family. As to quaternary structure, the 26S proteasome consists of a 20S proteasome core and two 19S regulatory subunits. The 20S proteasome core is a barrel-shaped complex made of 28 subunits that are arranged in four stacked rings. The two outer rings are each formed by seven alpha subunits, and the two inner rings are formed by seven beta subunits. The proteolytic activity is exerted by three beta-subunits PSMB5, PSMB6 and PSMB7. Interacts with SERPINB2. Interacts with RFPL4A. Detected in liver (at protein level).

The protein resides in the cytoplasm. Its subcellular location is the nucleus. Functionally, non-catalytic component of the 20S core proteasome complex involved in the proteolytic degradation of most intracellular proteins. This complex plays numerous essential roles within the cell by associating with different regulatory particles. Associated with two 19S regulatory particles, forms the 26S proteasome and thus participates in the ATP-dependent degradation of ubiquitinated proteins. The 26S proteasome plays a key role in the maintenance of protein homeostasis by removing misfolded or damaged proteins that could impair cellular functions, and by removing proteins whose functions are no longer required. Associated with the PA200 or PA28, the 20S proteasome mediates ubiquitin-independent protein degradation. This type of proteolysis is required in several pathways including spermatogenesis (20S-PA200 complex) or generation of a subset of MHC class I-presented antigenic peptides (20S-PA28 complex). This chain is Proteasome subunit beta type-1 (Psmb1), found in Mus musculus (Mouse).